Reading from the N-terminus, the 192-residue chain is MKVILASKSPRRVEILEKIVKEFEVVQSNFDENTIDFKGDVEKYVKDLSRNKAIEVSKRLNEPSIVIAADTVVFQNGKVLEKPKSEEDAFSMLSSLSGNTHKVYSGICLINTYDDTVVTDCDCTEVKFSELNPRQIRNYINSGEPMDKAGAYGIQGLGGAFVERIEGCYYNVMGLPLNKLYKALENYDITIL.

D70 (proton acceptor) is an active-site residue.

This sequence belongs to the Maf family. YhdE subfamily. The cofactor is a divalent metal cation.

The protein resides in the cytoplasm. It carries out the reaction dTTP + H2O = dTMP + diphosphate + H(+). The enzyme catalyses UTP + H2O = UMP + diphosphate + H(+). Its function is as follows. Nucleoside triphosphate pyrophosphatase that hydrolyzes dTTP and UTP. May have a dual role in cell division arrest and in preventing the incorporation of modified nucleotides into cellular nucleic acids. In Clostridium perfringens (strain SM101 / Type A), this protein is dTTP/UTP pyrophosphatase.